We begin with the raw amino-acid sequence, 77 residues long: Translation initiation factor IF-1, chloroplastic (77 aa).

In terms of domain architecture, S1-like spans 1-71; that stretch reads MKRQKWIHEG…TRGRIIYRLR (71 aa).

It belongs to the IF-1 family. As to quaternary structure, component of the 30S ribosomal translation pre-initiation complex which assembles on the 30S ribosome in the order IF-2 and IF-3, IF-1 and N-formylmethionyl-tRNA(fMet); mRNA recruitment can occur at any time during PIC assembly.

It is found in the plastid. It localises to the chloroplast. One of the essential components for the initiation of protein synthesis. Stabilizes the binding of IF-2 and IF-3 on the 30S subunit to which N-formylmethionyl-tRNA(fMet) subsequently binds. Helps modulate mRNA selection, yielding the 30S pre-initiation complex (PIC). Upon addition of the 50S ribosomal subunit IF-1, IF-2 and IF-3 are released leaving the mature 70S translation initiation complex. In Leucophyllum frutescens (Texas ranger), this protein is Translation initiation factor IF-1, chloroplastic.